We begin with the raw amino-acid sequence, 1303 residues long: DNA-directed RNA polymerase subunit beta'' (1303 aa).

The Zn(2+) site is built by C225, C299, C306, and C309.

It belongs to the RNA polymerase beta' chain family. RpoC2 subfamily. As to quaternary structure, in plastids the minimal PEP RNA polymerase catalytic core is composed of four subunits: alpha, beta, beta', and beta''. When a (nuclear-encoded) sigma factor is associated with the core the holoenzyme is formed, which can initiate transcription. Zn(2+) serves as cofactor.

The protein localises to the plastid. The protein resides in the chloroplast. It catalyses the reaction RNA(n) + a ribonucleoside 5'-triphosphate = RNA(n+1) + diphosphate. Functionally, DNA-dependent RNA polymerase catalyzes the transcription of DNA into RNA using the four ribonucleoside triphosphates as substrates. The sequence is that of DNA-directed RNA polymerase subunit beta'' from Rhodomonas salina (Cryptomonas salina).